The following is a 274-amino-acid chain: Formamidopyrimidine-DNA glycosylase (274 aa).

The active-site Schiff-base intermediate with DNA is Pro-2. Glu-3 serves as the catalytic Proton donor. The Proton donor; for beta-elimination activity role is filled by Lys-58. DNA-binding residues include His-91, Arg-110, and Lys-152. Residues 237-271 (KVYGRKNLPCLVCENKIETVVIAGRHSAFCPHCQP) form an FPG-type zinc finger. The active-site Proton donor; for delta-elimination activity is the Arg-261.

This sequence belongs to the FPG family. As to quaternary structure, monomer. Zn(2+) serves as cofactor.

The enzyme catalyses Hydrolysis of DNA containing ring-opened 7-methylguanine residues, releasing 2,6-diamino-4-hydroxy-5-(N-methyl)formamidopyrimidine.. It catalyses the reaction 2'-deoxyribonucleotide-(2'-deoxyribose 5'-phosphate)-2'-deoxyribonucleotide-DNA = a 3'-end 2'-deoxyribonucleotide-(2,3-dehydro-2,3-deoxyribose 5'-phosphate)-DNA + a 5'-end 5'-phospho-2'-deoxyribonucleoside-DNA + H(+). Functionally, involved in base excision repair of DNA damaged by oxidation or by mutagenic agents. Acts as a DNA glycosylase that recognizes and removes damaged bases. Has a preference for oxidized purines, such as 7,8-dihydro-8-oxoguanine (8-oxoG). Has AP (apurinic/apyrimidinic) lyase activity and introduces nicks in the DNA strand. Cleaves the DNA backbone by beta-delta elimination to generate a single-strand break at the site of the removed base with both 3'- and 5'-phosphates. This is Formamidopyrimidine-DNA glycosylase from Legionella pneumophila (strain Lens).